The chain runs to 216 residues: FMN-dependent NADH:quinone oxidoreductase (216 aa).

Residues Ser10 and 15–17 (SIS) each bind FMN.

It belongs to the azoreductase type 1 family. As to quaternary structure, homodimer. FMN is required as a cofactor.

It catalyses the reaction 2 a quinone + NADH + H(+) = 2 a 1,4-benzosemiquinone + NAD(+). The catalysed reaction is N,N-dimethyl-1,4-phenylenediamine + anthranilate + 2 NAD(+) = 2-(4-dimethylaminophenyl)diazenylbenzoate + 2 NADH + 2 H(+). Its function is as follows. Quinone reductase that provides resistance to thiol-specific stress caused by electrophilic quinones. Also exhibits azoreductase activity. Catalyzes the reductive cleavage of the azo bond in aromatic azo compounds to the corresponding amines. This Nocardia farcinica (strain IFM 10152) protein is FMN-dependent NADH:quinone oxidoreductase.